A 238-amino-acid polypeptide reads, in one-letter code: ATP-dependent dethiobiotin synthetase BioD (238 aa).

12–17 provides a ligand contact to ATP; that stretch reads EVGKTV. Thr16 is a binding site for Mg(2+). Lys37 is a catalytic residue. Residue Thr41 coordinates substrate. ATP-binding positions include Asp50, 109-112, 170-171, and 200-202; these read EGAG, GS, and PAG. Asp50 and Glu109 together coordinate Mg(2+).

Belongs to the dethiobiotin synthetase family. Homodimer. Mg(2+) is required as a cofactor.

Its subcellular location is the cytoplasm. It catalyses the reaction (7R,8S)-7,8-diammoniononanoate + CO2 + ATP = (4R,5S)-dethiobiotin + ADP + phosphate + 3 H(+). The protein operates within cofactor biosynthesis; biotin biosynthesis; biotin from 7,8-diaminononanoate: step 1/2. In terms of biological role, catalyzes a mechanistically unusual reaction, the ATP-dependent insertion of CO2 between the N7 and N8 nitrogen atoms of 7,8-diaminopelargonic acid (DAPA, also called 7,8-diammoniononanoate) to form a ureido ring. In Streptomyces avermitilis (strain ATCC 31267 / DSM 46492 / JCM 5070 / NBRC 14893 / NCIMB 12804 / NRRL 8165 / MA-4680), this protein is ATP-dependent dethiobiotin synthetase BioD.